Consider the following 583-residue polypeptide: Protein FMP25, mitochondrial (583 aa).

Residues 1-25 constitute a mitochondrion transit peptide; the sequence is MSFRLFTRTSQRLPRLNWVSPIRRY. Residues 83–105 form a helical membrane-spanning segment; it reads AVGQGILILVVVGGLGTAYLRWP. RCC1 repeat units follow at residues 332–389, 390–452, 459–510, and 512–569; these read KGQF…AIDK, TGEI…VTIR, DHHY…TETE, and ENEV…KEQR.

The protein resides in the mitochondrion membrane. In Saccharomyces cerevisiae (strain ATCC 204508 / S288c) (Baker's yeast), this protein is Protein FMP25, mitochondrial (FMP25).